We begin with the raw amino-acid sequence, 338 residues long: UDP-3-O-acylglucosamine N-acyltransferase (338 aa).

Histidine 251 serves as the catalytic Proton acceptor.

The protein belongs to the transferase hexapeptide repeat family. LpxD subfamily. Homotrimer.

The catalysed reaction is a UDP-3-O-[(3R)-3-hydroxyacyl]-alpha-D-glucosamine + a (3R)-hydroxyacyl-[ACP] = a UDP-2-N,3-O-bis[(3R)-3-hydroxyacyl]-alpha-D-glucosamine + holo-[ACP] + H(+). It functions in the pathway bacterial outer membrane biogenesis; LPS lipid A biosynthesis. Functionally, catalyzes the N-acylation of UDP-3-O-acylglucosamine using 3-hydroxyacyl-ACP as the acyl donor. Is involved in the biosynthesis of lipid A, a phosphorylated glycolipid that anchors the lipopolysaccharide to the outer membrane of the cell. The protein is UDP-3-O-acylglucosamine N-acyltransferase of Psychrobacter arcticus (strain DSM 17307 / VKM B-2377 / 273-4).